Here is a 438-residue protein sequence, read N- to C-terminus: Glycosyl hydrolase family 109 protein (438 aa).

The tat-type signal signal peptide spans 1–33 (MDKTSRRDLLKLASLAGIGAGLARSQGSSKSMA). Residues 52–53 (GR), Asp74, 125–128 (WVWH), 145–146 (EV), and Asn174 each bind NAD(+). Substrate-binding positions include Tyr203, Arg221, 233–236 (YPTH), and Tyr315. Tyr233 serves as a coordination point for NAD(+). Positions 408-438 (GPLSEASVANGSAPQKFPDFTRGKWQTRQPV) are disordered.

The protein belongs to the Gfo/Idh/MocA family. Glycosyl hydrolase 109 subfamily. NAD(+) is required as a cofactor. Predicted to be exported by the Tat system. The position of the signal peptide cleavage has not been experimentally proven.

Functionally, glycosidase. This Solibacter usitatus (strain Ellin6076) protein is Glycosyl hydrolase family 109 protein.